Here is a 738-residue protein sequence, read N- to C-terminus: 1,4-alpha-glucan branching enzyme GlgB (738 aa).

Catalysis depends on Asp-399, which acts as the Nucleophile. Residue Glu-452 is the Proton donor of the active site.

This sequence belongs to the glycosyl hydrolase 13 family. GlgB subfamily. As to quaternary structure, monomer.

It carries out the reaction Transfers a segment of a (1-&gt;4)-alpha-D-glucan chain to a primary hydroxy group in a similar glucan chain.. The protein operates within glycan biosynthesis; glycogen biosynthesis. Functionally, catalyzes the formation of the alpha-1,6-glucosidic linkages in glycogen by scission of a 1,4-alpha-linked oligosaccharide from growing alpha-1,4-glucan chains and the subsequent attachment of the oligosaccharide to the alpha-1,6 position. In Chlamydia trachomatis serovar D (strain ATCC VR-885 / DSM 19411 / UW-3/Cx), this protein is 1,4-alpha-glucan branching enzyme GlgB.